An 80-amino-acid polypeptide reads, in one-letter code: U-poneritoxin(01)-Om3a (80 aa).

The first 25 residues, 1 to 25 (MKPSGLALAFLVVFMMAIMYNSVQA), serve as a signal peptide directing secretion. Positions 26-39 (AAIADADAEAEAIA) are excised as a propeptide.

Belongs to the formicidae venom precursor-01 superfamily. Truncated sequences of this peptide have also been found in the venom. It is possible they have been cleaved in the venom. As to expression, expressed by the venom gland.

The protein resides in the secreted. In terms of biological role, cationic amphipathic alpha-helical peptide with antimicrobial activities against E.coli (MIC=3.1 uM), S.aureus (MIC=25 uM), and S.cerevisiae (MIC=50 uM). Also shows histamine-releasing activity (37.5% at 10 uM). Does not show hemolytic activity, even at 50 uM. The protein is U-poneritoxin(01)-Om3a of Odontomachus monticola (Trap-jaw ant).